The chain runs to 84 residues: Acyl carrier protein homolog (84 aa).

Residues 4–79 (HEILLKIKEI…DLVLEVKNLL (76 aa)) form the Carrier domain. The residue at position 39 (serine 39) is an O-(pantetheine 4'-phosphoryl)serine.

4'-phosphopantetheine is transferred from CoA to a specific serine of the apo-ACP-like protein.

Its pathway is lipid metabolism; fatty acid biosynthesis. In terms of biological role, carrier of the growing fatty acid chain in fatty acid biosynthesis. In Mycoplasma genitalium (strain ATCC 33530 / DSM 19775 / NCTC 10195 / G37) (Mycoplasmoides genitalium), this protein is Acyl carrier protein homolog.